The primary structure comprises 198 residues: NADH-quinone oxidoreductase subunit C (198 aa).

The protein belongs to the complex I 30 kDa subunit family. In terms of assembly, NDH-1 is composed of 14 different subunits. Subunits NuoB, C, D, E, F, and G constitute the peripheral sector of the complex.

The protein localises to the cell inner membrane. The catalysed reaction is a quinone + NADH + 5 H(+)(in) = a quinol + NAD(+) + 4 H(+)(out). Functionally, NDH-1 shuttles electrons from NADH, via FMN and iron-sulfur (Fe-S) centers, to quinones in the respiratory chain. The immediate electron acceptor for the enzyme in this species is believed to be ubiquinone. Couples the redox reaction to proton translocation (for every two electrons transferred, four hydrogen ions are translocated across the cytoplasmic membrane), and thus conserves the redox energy in a proton gradient. This is NADH-quinone oxidoreductase subunit C from Chromobacterium violaceum (strain ATCC 12472 / DSM 30191 / JCM 1249 / CCUG 213 / NBRC 12614 / NCIMB 9131 / NCTC 9757 / MK).